The sequence spans 80 residues: MPKRILQGVVVSDKQEKTIVVKVERRFTHPLLKKTVRRSKNYHAHDEAGTYKIGDTVSIEETKPISRLKRWIVLETAAKA.

The protein belongs to the universal ribosomal protein uS17 family. In terms of assembly, part of the 30S ribosomal subunit.

Its function is as follows. One of the primary rRNA binding proteins, it binds specifically to the 5'-end of 16S ribosomal RNA. In Beijerinckia indica subsp. indica (strain ATCC 9039 / DSM 1715 / NCIMB 8712), this protein is Small ribosomal subunit protein uS17.